A 351-amino-acid polypeptide reads, in one-letter code: Probable dual-specificity RNA methyltransferase RlmN (351 aa).

Catalysis depends on Glu-97, which acts as the Proton acceptor. Residues 103–337 (YDYGNTVCIS…VTVRKERGVD (235 aa)) form the Radical SAM core domain. Cys-110 and Cys-342 are joined by a disulfide. Residues Cys-117, Cys-121, and Cys-124 each coordinate [4Fe-4S] cluster. Residues 166–167 (GE), Ser-198, 221–223 (SLH), and Asn-299 contribute to the S-adenosyl-L-methionine site. Cys-342 functions as the S-methylcysteine intermediate in the catalytic mechanism.

Belongs to the radical SAM superfamily. RlmN family. The cofactor is [4Fe-4S] cluster.

The protein localises to the cytoplasm. The enzyme catalyses adenosine(2503) in 23S rRNA + 2 reduced [2Fe-2S]-[ferredoxin] + 2 S-adenosyl-L-methionine = 2-methyladenosine(2503) in 23S rRNA + 5'-deoxyadenosine + L-methionine + 2 oxidized [2Fe-2S]-[ferredoxin] + S-adenosyl-L-homocysteine. It carries out the reaction adenosine(37) in tRNA + 2 reduced [2Fe-2S]-[ferredoxin] + 2 S-adenosyl-L-methionine = 2-methyladenosine(37) in tRNA + 5'-deoxyadenosine + L-methionine + 2 oxidized [2Fe-2S]-[ferredoxin] + S-adenosyl-L-homocysteine. In terms of biological role, specifically methylates position 2 of adenine 2503 in 23S rRNA and position 2 of adenine 37 in tRNAs. The chain is Probable dual-specificity RNA methyltransferase RlmN from Natranaerobius thermophilus (strain ATCC BAA-1301 / DSM 18059 / JW/NM-WN-LF).